The primary structure comprises 134 residues: DNA-directed RNA polymerase subunit omega (134 aa).

The protein belongs to the RNA polymerase subunit omega family. In terms of assembly, the RNAP catalytic core consists of 2 alpha, 1 beta, 1 beta' and 1 omega subunit. When a sigma factor is associated with the core the holoenzyme is formed, which can initiate transcription.

The enzyme catalyses RNA(n) + a ribonucleoside 5'-triphosphate = RNA(n+1) + diphosphate. Its function is as follows. Promotes RNA polymerase assembly. Latches the N- and C-terminal regions of the beta' subunit thereby facilitating its interaction with the beta and alpha subunits. This is DNA-directed RNA polymerase subunit omega from Rhizobium etli (strain CIAT 652).